The chain runs to 459 residues: Vanillin aminotransferase (459 aa).

Pyridoxal 5'-phosphate is bound by residues 115 to 116 (GS) and Asp-255. The residue at position 284 (Lys-284) is an N6-(pyridoxal phosphate)lysine. Residue 320-321 (FT) coordinates pyridoxal 5'-phosphate. Residues 428–459 (LSLEELDELIRIYGKALKDTEKRVEELKSQKK) adopt a coiled-coil conformation.

This sequence belongs to the class-III pyridoxal-phosphate-dependent aminotransferase family. In terms of tissue distribution, expressed in placental tissue of immature fruit.

It catalyses the reaction vanillin + L-alanine = vanillylamine + pyruvate. It participates in aromatic compound metabolism; phenylpropanoid biosynthesis. In terms of biological role, involved in the biosynthesis of capsaicinoids natural products, pungent alkaloids synthesized from phenylpropanoid intermediates in the placental tissue of chili pepper fruit acting as repellant on herbivorous mammals and conferring spiciness to hot peppers. Can transfer an amine from vanillylamine to pyruvate forming vanillin and L-alanine. Can use pyruvate or oxaloacetate, but not 2-oxoglutarate as amino group acceptors. Is able to convert (S)-1-phenylethylamine into acetophenone in vitro. This is Vanillin aminotransferase from Capsicum chinense (Scotch bonnet).